A 363-amino-acid polypeptide reads, in one-letter code: UDP-N-acetylglucosamine--N-acetylmuramyl-(pentapeptide) pyrophosphoryl-undecaprenol N-acetylglucosamine transferase (363 aa).

Residues 10–12 (TGG), N124, S195, I250, and Q295 contribute to the UDP-N-acetyl-alpha-D-glucosamine site.

The protein belongs to the glycosyltransferase 28 family. MurG subfamily.

It is found in the cell membrane. It carries out the reaction di-trans,octa-cis-undecaprenyl diphospho-N-acetyl-alpha-D-muramoyl-L-alanyl-D-glutamyl-meso-2,6-diaminopimeloyl-D-alanyl-D-alanine + UDP-N-acetyl-alpha-D-glucosamine = di-trans,octa-cis-undecaprenyl diphospho-[N-acetyl-alpha-D-glucosaminyl-(1-&gt;4)]-N-acetyl-alpha-D-muramoyl-L-alanyl-D-glutamyl-meso-2,6-diaminopimeloyl-D-alanyl-D-alanine + UDP + H(+). Its pathway is cell wall biogenesis; peptidoglycan biosynthesis. In terms of biological role, cell wall formation. Catalyzes the transfer of a GlcNAc subunit on undecaprenyl-pyrophosphoryl-MurNAc-pentapeptide (lipid intermediate I) to form undecaprenyl-pyrophosphoryl-MurNAc-(pentapeptide)GlcNAc (lipid intermediate II). In Listeria monocytogenes serotype 4b (strain CLIP80459), this protein is UDP-N-acetylglucosamine--N-acetylmuramyl-(pentapeptide) pyrophosphoryl-undecaprenol N-acetylglucosamine transferase.